The sequence spans 312 residues: Probable cell division protein WhiA (312 aa).

The segment at residues 274–308 (SLKELGTLVPGGPISKSGVNHRLRKLNAYADELRQ) is a DNA-binding region (H-T-H motif).

Belongs to the WhiA family.

Functionally, involved in cell division and chromosome segregation. This Limosilactobacillus fermentum (strain NBRC 3956 / LMG 18251) (Lactobacillus fermentum) protein is Probable cell division protein WhiA.